Here is a 268-residue protein sequence, read N- to C-terminus: Imidazole glycerol phosphate synthase subunit HisF (268 aa).

Residues Asp12 and Asp131 contribute to the active site.

The protein belongs to the HisA/HisF family. As to quaternary structure, heterodimer of HisH and HisF.

The protein resides in the cytoplasm. The enzyme catalyses 5-[(5-phospho-1-deoxy-D-ribulos-1-ylimino)methylamino]-1-(5-phospho-beta-D-ribosyl)imidazole-4-carboxamide + L-glutamine = D-erythro-1-(imidazol-4-yl)glycerol 3-phosphate + 5-amino-1-(5-phospho-beta-D-ribosyl)imidazole-4-carboxamide + L-glutamate + H(+). It participates in amino-acid biosynthesis; L-histidine biosynthesis; L-histidine from 5-phospho-alpha-D-ribose 1-diphosphate: step 5/9. Its function is as follows. IGPS catalyzes the conversion of PRFAR and glutamine to IGP, AICAR and glutamate. The HisF subunit catalyzes the cyclization activity that produces IGP and AICAR from PRFAR using the ammonia provided by the HisH subunit. The chain is Imidazole glycerol phosphate synthase subunit HisF from Methanocorpusculum labreanum (strain ATCC 43576 / DSM 4855 / Z).